Consider the following 150-residue polypeptide: Endoribonuclease YbeY (150 aa).

Zn(2+) contacts are provided by H116, H120, and H126.

Belongs to the endoribonuclease YbeY family. Zn(2+) serves as cofactor.

It localises to the cytoplasm. Single strand-specific metallo-endoribonuclease involved in late-stage 70S ribosome quality control and in maturation of the 3' terminus of the 16S rRNA. The chain is Endoribonuclease YbeY from Mesomycoplasma hyopneumoniae (strain 232) (Mycoplasma hyopneumoniae).